We begin with the raw amino-acid sequence, 203 residues long: Thymidylate kinase (203 aa).

Gly-7–Thr-14 is a binding site for ATP.

The protein belongs to the thymidylate kinase family.

The enzyme catalyses dTMP + ATP = dTDP + ADP. Phosphorylation of dTMP to form dTDP in both de novo and salvage pathways of dTTP synthesis. The polypeptide is Thymidylate kinase (Chlamydia trachomatis serovar L2 (strain ATCC VR-902B / DSM 19102 / 434/Bu)).